The chain runs to 32 residues: Calcitonin (32 aa).

Cysteines 1 and 7 form a disulfide. Proline amide is present on P32.

It belongs to the calcitonin family.

It localises to the secreted. Its function is as follows. Causes a rapid but short-lived drop in the level of calcium and phosphate in blood by promoting the incorporation of those ions in the bones. This Aquarana catesbeiana (American bullfrog) protein is Calcitonin.